Consider the following 730-residue polypeptide: Denticleless protein homolog (730 aa).

M1 is subject to N-acetylmethionine. WD repeat units follow at residues 47–89, 96–135, and 138–178; these read GVPV…FRKK, AHWN…LIGT, and GHQC…KDGF. The short motif at 168–171 is the DDB1-binding motif element; it reads WDTR. A compositionally biased stretch (polar residues) spans 188–198; it reads AHNTSDKQTPS. The disordered stretch occupies residues 188–210; it reads AHNTSDKQTPSKPKKKQNSKGLA. T196 carries the post-translational modification Phosphothreonine. The Nuclear localization signal signature appears at 197-203; sequence PSKPKKK. 4 WD repeats span residues 214 to 253, 267 to 308, 313 to 354, and 358 to 398; these read DFQQ…TAYR, SSTR…TSPV, GHQN…QPPT, and GHSQ…EEKP. The short motif at 243–246 is the DDB1-binding motif element; sequence WDLR. Residues 399–443 are disordered; sequence GGDKLSTVGWASQKKKESRPGLVTVTSSQSTPAKAPRAKCNPSNS. Residues S410 and S426 each carry the phosphoserine modification. T464 is modified (phosphothreonine; by CDK1 and CDK2). A disordered region spans residues 465 to 498; sequence PTFSIKTSPAKARSPINRRGSVSSVSPKPPSSFK. 4 positions are modified to phosphoserine: S485, S490, S495, and S512. T516 carries the phosphothreonine modification. The residue at position 557 (S557) is a Phosphoserine. 2 disordered regions span residues 599 to 631 and 644 to 703; these read SKDS…YASE and GEGS…TITP. Residues S676 and S679 each carry the phosphoserine modification. Positions 679-689 are enriched in polar residues; sequence SPSSQTPNSRR. 2 positions are modified to phosphothreonine: T684 and T702. S717 is modified (phosphoserine).

This sequence belongs to the WD repeat cdt2 family. In terms of assembly, component of the DCX(DTL) E3 ubiquitin ligase complex (also called CRL4(CDT2)), at least composed of CUL4 (CUL4A or CUL4B), DDB1, DTL/CDT2 and RBX1. Interacts with CDKN1A. Interacts with DDB1. Interacts with FBXO11; SCF(FBXWO11) controls DTL stability but DCX(DTL) does not control FBXO11 stability. Interacts with CRY1. Post-translationally, ubiquitinated by the anaphase promoting complex/cyclosome (APC/C). Autoubiquitinated through 'Lys-48'-polyubiquitin chains in a PCNA-independent reaction, allowing proteasomal turnover. Polyubiquitinated by SCF(FBXO11) when not phosphorylated, leading to its degradation. A tight regulation of the polyubiquitination by SCF(FBXO11) is involved in the control of different processes such as TGF-beta signaling, cell cycle progression and exit. Phosphorylated at Thr-464 by CDK1/Cyclin-B and CDK2/Cyclin-A but not by CDK2/Cyclin-E, MAPK1 or PLK1. Phosphorylation at Thr-464 inhibits the interaction with FBXO11 and decreases upon cell cycle exit induced by TGF-beta or serum starvation. In terms of tissue distribution, expressed in placenta and testis, very low expression seen in skeletal muscle. Detected in all hematopoietic tissues examined, with highest expression in thymus and bone marrow. A low level detected in the spleen and lymph node, and barely detectable level in the peripheral leukocytes. RA treatment down-regulated the expression in NT2 cell.

It is found in the nucleus. Its subcellular location is the nucleus membrane. It localises to the cytoplasm. The protein resides in the cytoskeleton. The protein localises to the microtubule organizing center. It is found in the centrosome. Its subcellular location is the chromosome. It functions in the pathway protein modification; protein ubiquitination. Substrate-specific adapter of a DCX (DDB1-CUL4-X-box) E3 ubiquitin-protein ligase complex required for cell cycle control, DNA damage response and translesion DNA synthesis. The DCX(DTL) complex, also named CRL4(CDT2) complex, mediates the polyubiquitination and subsequent degradation of CDT1, CDKN1A/p21(CIP1), FBH1, KMT5A and SDE2. CDT1 degradation in response to DNA damage is necessary to ensure proper cell cycle regulation of DNA replication. CDKN1A/p21(CIP1) degradation during S phase or following UV irradiation is essential to control replication licensing. KMT5A degradation is also important for a proper regulation of mechanisms such as TGF-beta signaling, cell cycle progression, DNA repair and cell migration. Most substrates require their interaction with PCNA for their polyubiquitination: substrates interact with PCNA via their PIP-box, and those containing the 'K+4' motif in the PIP box, recruit the DCX(DTL) complex, leading to their degradation. In undamaged proliferating cells, the DCX(DTL) complex also promotes the 'Lys-164' monoubiquitination of PCNA, thereby being involved in PCNA-dependent translesion DNA synthesis. The DDB1-CUL4A-DTL E3 ligase complex regulates the circadian clock function by mediating the ubiquitination and degradation of CRY1. The polypeptide is Denticleless protein homolog (DTL) (Homo sapiens (Human)).